A 90-amino-acid chain; its full sequence is Small ribosomal subunit protein bS20 (90 aa).

Positions 1-21 are disordered; that stretch reads MANHKSALKRVRQTKKRTERN.

The protein belongs to the bacterial ribosomal protein bS20 family.

Binds directly to 16S ribosomal RNA. This chain is Small ribosomal subunit protein bS20, found in Nitratiruptor sp. (strain SB155-2).